We begin with the raw amino-acid sequence, 211 residues long: tRNA (guanine-N(7)-)-methyltransferase (211 aa).

Glu-44, Asp-69, Asp-96, and Asp-118 together coordinate S-adenosyl-L-methionine. The active site involves Asp-118. Residue Lys-122 participates in substrate binding. Positions 124–129 are interaction with RNA; the sequence is RHEKRR. Substrate contacts are provided by residues Asp-154 and 191–194; that span reads TEYE.

The protein belongs to the class I-like SAM-binding methyltransferase superfamily. TrmB family.

The catalysed reaction is guanosine(46) in tRNA + S-adenosyl-L-methionine = N(7)-methylguanosine(46) in tRNA + S-adenosyl-L-homocysteine. It functions in the pathway tRNA modification; N(7)-methylguanine-tRNA biosynthesis. Catalyzes the formation of N(7)-methylguanine at position 46 (m7G46) in tRNA. The sequence is that of tRNA (guanine-N(7)-)-methyltransferase from Streptococcus equi subsp. equi (strain 4047).